The sequence spans 486 residues: MADLGKKYCVNCLADVTNLRIRCAECQDIELCPECFSAGAEIGNHRRWHGYQQVDGGRFSLWGPEAEGGWTSREEQSLLDAIEQYGFGNWEDMAAHVGASRTPQEVMDHYVSMYIHGNLGKACIPDSIPNRVTDHTCPSGGPLSPSLTTPLPPLDITVVEQQQLGYMPLRDDYEIEYDQEAEKLISGLSVNYDDEDIEIEMKRAHVDMYVRKLRERQRRKNIARDYNLVPAFLGRDKKDKERERAGGTVGVGGPGGAVGSGSGATVVPAGPLGSSTAATPKRKITKEEKGQRTKLRALCQFMPQREFEEFFDNMHKERMLRAKVRELQRYRRNGITRLDESAEYEAARHKREKRKENKSIAGSKRGSSGGGGGTAGLGGGVGAGGGLGGGGGVSTIKEEGKDSEFSAIENLSGFELLSDREKVLCNSMNLSPMRYLTVKTIIIKDHLQKRQGIPSKSRLPSYLDKVLKKRILNFLSESGWISRDAS.

A ZZ-type zinc finger spans residues 4 to 59 (LGKKYCVNCLADVTNLRIRCAECQDIELCPECFSAGAEIGNHRRWHGYQQVDGGRF). Positions 9, 12, 23, 26, 32, 35, 45, and 49 each coordinate Zn(2+). In terms of domain architecture, SANT spans 65–118 (EAEGGWTSREEQSLLDAIEQYGFGNWEDMAAHVGASRTPQEVMDHYVSMYIHGN). Disordered stretches follow at residues 237-291 (KKDK…EKGQ) and 343-377 (EYEAARHKREKRKENKSIAGSKRGSSGGGGGTAGL). Composition is skewed to gly residues over residues 247–262 (GTVGVGGPGGAVGSGS) and 367–377 (SSGGGGGTAGL).

The protein resides in the nucleus. Its function is as follows. Transcriptional coactivator. This Danio rerio (Zebrafish) protein is Transcriptional adapter 2-beta (tada2b).